A 266-amino-acid chain; its full sequence is Beta-lactamase OXA-10 (266 aa).

An N-terminal signal peptide occupies residues M1–A19. C44 and C51 are oxidised to a cystine. The active-site Acyl-ester intermediate is the S67. K70 is subject to N6-carboxylysine. Positions 115, 206, 208, and 250 each coordinate a beta-lactam.

It belongs to the class-D beta-lactamase family. In terms of assembly, dimer.

Its subcellular location is the periplasm. The catalysed reaction is a beta-lactam + H2O = a substituted beta-amino acid. With respect to regulation, activated, with respect to most beta-lactam substrates, in the presence of 0.05 M sodium bicarbonate. In terms of biological role, class D beta-lactamase which confers resistance to the beta-lactam antibiotics, including penicillin, carbenicillin and oxacillin, and also some cephalosporins. Confers weak resistance to some carbapenems, in E.coli strain C600Z1. Acts via hydrolysis of the beta-lactam ring. Has penicillin- and cephalosporin-hydrolyzing activities. In Pseudomonas aeruginosa, this protein is Beta-lactamase OXA-10.